The following is a 762-amino-acid chain: Lysyl oxidase homolog 2B (762 aa).

The signal sequence occupies residues 1-20 (MLALWSISFVLLCSWRLSYA). 4 consecutive SRCR domains span residues 53–154 (LRLA…VVCS), 183–292 (IRPI…VSCI), 316–417 (VRLR…VKCN), and 427–536 (LRLS…VSCS). Intrachain disulfides connect Cys79/Cys143, Cys92/Cys153, Cys123/Cys133, Cys213/Cys281, Cys226/Cys291, Cys260/Cys270, Cys341/Cys406, Cys354/Cys416, and Cys385/Cys395. An N-linked (GlcNAc...) asparagine glycan is attached at Asn278. An N-linked (GlcNAc...) asparagine glycan is attached at Asn447. 3 cysteine pairs are disulfide-bonded: Cys456–Cys522, Cys469–Cys535, and Cys503–Cys513. The interval 540–742 (PDLVLNPQVV…WMYNCHIGGS (203 aa)) is lysyl-oxidase like. The Ca(2+) site is built by Asp541 and Leu542. 4 cysteine pairs are disulfide-bonded: Cys565/Cys616, Cys571/Cys686, Cys648/Cys664, and Cys654/Cys676. Cu cation contacts are provided by His617, His619, and His621. Asn635 carries N-linked (GlcNAc...) asparagine glycosylation. The lysine tyrosylquinone (Lys-Tyr) cross-link spans 644–680 (KASFCLEDSECDEGIEKRYECANFGEQGITVGCWDTY). Residue Tyr680 is modified to 2',4',5'-topaquinone. Residues Glu713, Asp715, Asn718, and Asn719 each coordinate Ca(2+). Cys723 and Cys737 are joined by a disulfide.

It belongs to the lysyl oxidase family. It depends on Cu cation as a cofactor. Lysine tyrosylquinone residue is required as a cofactor. In terms of processing, the lysine tyrosylquinone cross-link (LTQ) is generated by condensation of the epsilon-amino group of a lysine with a topaquinone produced by oxidation of tyrosine.

The protein localises to the secreted. The protein resides in the extracellular space. It is found in the extracellular matrix. Its subcellular location is the basement membrane. It localises to the nucleus. The protein localises to the chromosome. The protein resides in the endoplasmic reticulum. The enzyme catalyses L-lysyl-[protein] + O2 + H2O = (S)-2-amino-6-oxohexanoyl-[protein] + H2O2 + NH4(+). Its function is as follows. Mediates the post-translational oxidative deamination of lysine residues on target proteins leading to the formation of deaminated lysine (allysine). Acts as a transcription corepressor and specifically mediates deamination of trimethylated 'Lys-4' of histone H3 (H3K4me3), a specific tag for epigenetic transcriptional activation. Shows no activity against histone H3 when it is trimethylated on 'Lys-9' (H3K9me3) or 'Lys-27' (H3K27me3) or when 'Lys-4' is monomethylated (H3K4me1) or dimethylated (H3K4me2). Also mediates deamination of methylated TAF10, a member of the transcription factor IID (TFIID) complex, which induces release of TAF10 from promoters, leading to inhibition of TFIID-dependent transcription. LOXL2-mediated deamination of TAF10 results in transcriptional repression of genes required for embryonic stem cell pluripotency. Involved in epithelial to mesenchymal transition (EMT) and participates in repression of E-cadherin, probably by mediating deamination of histone H3. When secreted into the extracellular matrix, promotes cross-linking of extracellular matrix proteins by mediating oxidative deamination of peptidyl lysine residues in precursors to fibrous collagen and elastin. Acts as a regulator of sprouting angiogenesis, probably via collagen IV scaffolding. Acts as a regulator of chondrocyte differentiation, probably by regulating expression of factors that control chondrocyte differentiation. Required with loxl2a for correct expression of Sox2 and for neural differentiation. The polypeptide is Lysyl oxidase homolog 2B (loxl2b) (Danio rerio (Zebrafish)).